A 456-amino-acid polypeptide reads, in one-letter code: Maturase-like protein 1 (456 aa).

To group II intron maturases.

The protein localises to the plastid. Could be required for group III intron excision. The sequence is that of Maturase-like protein 1 (mat1) from Euglena longa (Euglenophycean alga).